The following is a 105-amino-acid chain: UPF0145 protein Mevan_1624 (105 aa).

Belongs to the UPF0145 family.

This Methanococcus vannielii (strain ATCC 35089 / DSM 1224 / JCM 13029 / OCM 148 / SB) protein is UPF0145 protein Mevan_1624.